A 93-amino-acid polypeptide reads, in one-letter code: Cell division protein CrgA (93 aa).

2 helical membrane passes run 31 to 51 (VWFV…LMVF) and 70 to 90 (LGPW…LLTM).

Belongs to the CrgA family.

Its subcellular location is the cell membrane. In terms of biological role, involved in cell division. This chain is Cell division protein CrgA, found in Mycobacterium bovis (strain ATCC BAA-935 / AF2122/97).